Consider the following 526-residue polypeptide: Choline/ethanolamine transporter FLVCR2 (526 aa).

The segment at 1-70 (MVNEGPNQEE…PSGLAHPSSS (70 aa)) is disordered. The Cytoplasmic segment spans residues 1–76 (MVNEGPNQEE…PSSSGPEDLS (76 aa)). 1–84 (MVNEGPNQEE…LSVIKVSRRR (84 aa)) is a binding site for heme b. Repeat copies occupy residues 25–30 (PSVSVH), 31–36 (PSVSVH), 37–42 (PSVSIN), 43–48 (PSVSVH), and 49–54 (PSSSAH). Over residues 25–56 (PSVSVHPSVSVHPSVSINPSVSVHPSSSAHPS) the composition is skewed to low complexity. The segment at 25–72 (PSVSVHPSVSVHPSVSINPSVSVHPSSSAHPSALAQPSGLAHPSSSGP) is 8 X 6 AA tandem repeats of P-S-[VS]-S-[VIAG]-[HNP]. The 6; approximate repeat unit spans residues 55–60 (PSALAQ). One copy of the 7; approximate repeat lies at 61–66 (PSGLAH). Residues 67–72 (PSSSGP) form repeat 8. Residues 77-101 (VIKVSRRRWAVVLVFSCYSMCNSFQ) form a helical membrane-spanning segment. Choline contacts are provided by Asn-98 and Trp-102. The Extracellular segment spans residues 102 to 119 (WIQYGSINNIFMHFYGVS). A helical transmembrane segment spans residues 120–147 (AFAIDWLSMCYMLTYIPLLLPVAWLLEK). The Cytoplasmic segment spans residues 148-149 (FG). Residues 150–169 (LRTIALTGSALNCLGAWVKL) traverse the membrane as a helical segment. Topologically, residues 170-176 (GSLKPHL) are extracellular. The chain crosses the membrane as a helical span at residues 177–205 (FPVTVVGQLICSVAQVFILGMPSRIASVW). The choline site is built by Gln-191 and Leu-195. The Cytoplasmic portion of the chain corresponds to 206 to 210 (FGANE). The helical transmembrane segment at 211 to 236 (VSTACSVAVFGNQLGIAIGFLVPPVL) threads the bilayer. The Extracellular portion of the chain corresponds to 237–241 (VPNIE). A helical transmembrane segment spans residues 242 to 271 (DRDELAYHISIMFYIIGGVATLLLILVIIV). At 272-307 (FKEKPKYPPSRAQSLSYALTSPDASYLGSIARLFKN) the chain is on the cytoplasmic side. The helical transmembrane segment at 308-338 (LNFVLLVITYGLNAGAFYALSTLLNRMVIWH) threads the bilayer. Tyr-325 lines the choline pocket. Residues 339–342 (YPGE) lie on the Extracellular side of the membrane. The helical transmembrane segment at 343–371 (EVNAGRIGLTIVIAGMLGAVISGIWLDRS) threads the bilayer. Residues 372 to 373 (KT) lie on the Cytoplasmic side of the membrane. The helical transmembrane segment at 374 to 396 (YKETTLVVYIMTLVGMVVYTFTL) threads the bilayer. Residues 397–399 (NLG) lie on the Extracellular side of the membrane. The helical transmembrane segment at 400–429 (HLWVVFITAGTMGFFMTGYLPLGFEFAVEL) threads the bilayer. Topologically, residues 430 to 437 (TYPESEGI) are cytoplasmic. Residues 438 to 463 (SSGLLNISAQVFGIIFTISQGQIIDN) form a helical membrane-spanning segment. Residue Gln-447 coordinates choline. At 464–465 (YG) the chain is on the extracellular side. The chain crosses the membrane as a helical span at residues 466–488 (TKPGNIFLCVFLTLGAALTAFIK). At 489 to 526 (ADLRRQKANKETLENKLQEEEEESNTSKVPTAVSEDHL) the chain is on the cytoplasmic side. Residues 500–526 (TLENKLQEEEEESNTSKVPTAVSEDHL) form a disordered region. Phosphoserine is present on Ser-515.

The protein belongs to the major facilitator superfamily. Feline leukemia virus subgroup C receptor (TC 2.A.1.28.1) family. In terms of assembly, interacts with components of electron transfer chain complexes III, IV and V including CYC1, NDUFA4, COX4I1, ATP5PD and ATP5F1C; these interactions occur in the absence of heme and are disrupted upon heme binding. Interacts with ATP2A2; this interaction occurs in the absence of heme and promotes ATP2A2 proteasomal degradation; the complex is dissociated upon heme binding. Interacts with HMOX1; this interaction is potentiated in the presence of heme. In terms of tissue distribution, expressed in non-hematopoietic tissues, with relative abundant expression in brain, placenta, lung, liver and kidney. Also expressed in hematopoietic tissues (fetal liver, spleen, lymph node, thymus, leukocytes and bone marrow). Found in acidophil cells of the pituitary that secrete growth hormone and prolactin (at protein level).

Its subcellular location is the cell membrane. The protein resides in the mitochondrion membrane. It is found in the endoplasmic reticulum membrane. The catalysed reaction is choline(out) = choline(in). It catalyses the reaction ethanolamine(in) = ethanolamine(out). The enzyme catalyses heme b(in) = heme b(out). Choline uniporter that specifically mediates choline uptake at the blood-brain-barrier. Responsible for the majority of choline uptake across the blood-brain-barrier from the circulation into the brain. Choline, a nutrient critical for brain development, is a precursor of phosphatidylcholine, as well as betaine. Also mediates transport of ethanolamine. Choline and ethanolamine transport is not coupled with proton transport and is exclusively driven by the choline gradient across the plasma membrane. However, the presence of an inwardly directed proton gradient enhances choline uptake. Also acts as a heme b transporter. Required to regulate mitochondrial respiration processes, ATP synthesis and thermogenesis. At low heme levels, interacts with components of electron transfer chain (ETC) complexes and ATP2A2, leading to ubiquitin-mediated degradation of ATP2A2 and inhibition of thermogenesis. Upon heme binding, dissociates from ETC complexes to allow switching from mitochondrial ATP synthesis to thermogenesis. This chain is Choline/ethanolamine transporter FLVCR2, found in Homo sapiens (Human).